Consider the following 263-residue polypeptide: LIM and SH3 domain protein 1 (263 aa).

Residue methionine 1 is modified to N-acetylmethionine. The 52-residue stretch at cysteine 5–histidine 56 folds into the LIM zinc-binding domain. The residue at position 42 (lysine 42) is an N6-acetyllysine. 2 Nebulin repeats span residues serine 61–glycine 95 and glycine 97–methionine 131. Threonine 68 carries the phosphothreonine modification. Lysine 75 bears the N6-methyllysine mark. Phosphoserine is present on serine 99. The residue at position 104 (threonine 104) is a Phosphothreonine. Lysine 112 carries the N6-succinyllysine modification. Serine 118 and serine 134 each carry phosphoserine. Residues histidine 123–lysine 207 are disordered. Polar residues predominate over residues aspartate 148–glutamine 162. Threonine 156 carries the post-translational modification Phosphothreonine; by PKA. An SH3 domain is found at glycine 204–isoleucine 263.

As to quaternary structure, interacts with F-actin. Interacts with KBTBD10. Interacts with ANKRD54.

The protein localises to the cytoplasm. Its subcellular location is the cell cortex. The protein resides in the cytoskeleton. Functionally, plays an important role in the regulation of dynamic actin-based, cytoskeletal activities. Agonist-dependent changes in LASP1 phosphorylation may also serve to regulate actin-associated ion transport activities, not only in the parietal cell but also in certain other F-actin-rich secretory epithelial cell types. In Mus musculus (Mouse), this protein is LIM and SH3 domain protein 1 (Lasp1).